The sequence spans 266 residues: Luciferase (266 aa).

The helical transmembrane segment at 22-41 (GLAVTCCAVAVASIIAFPYI) threads the bilayer.

The protein belongs to the fungal luciferase family.

It is found in the membrane. The enzyme catalyses 3-hydroxyhispidin + O2 = (E)-caffeoylpyruvate + hnu + CO2. It carries out the reaction 3-hydroxyhispidin + O2 = 4-[(E)-2-(3,4-dihydroxyphenyl)ethenyl]-1,7-dihydroxy-2,3,5-trioxabicyclo[2.2.2]oct-7-en-6-one. Its function is as follows. Luciferase; part of the gene cluster that mediates the fungal bioluminescence cycle. Uses the fungal luciferin 3-hydroxyhispidin as a substrate to produce an endoperoxide as a high-energy intermediate with decomposition that yields oxyluciferin (also known as caffeoylpyruvate) and light emission. The fungal bioluminescence cycle begins with the hispidin synthetase that catalyzes the formation of hispidin which is further hydroxylated by the hispidin-3-hydroxylase, yielding the fungal luciferin 3-hydroxyhispidin. The luciferase then produces an endoperoxide as a high-energy intermediate with decomposition that yields oxyluciferin and light emission. Oxyluciferin can be recycled to caffeic acid by caffeoylpyruvate hydrolase. This chain is Luciferase, found in Armillaria mellea (Honey mushroom).